The sequence spans 453 residues: GTPase Der (453 aa).

EngA-type G domains are found at residues 4 to 169 (PIVA…PPTT) and 177 to 352 (IKIA…EEHK). GTP contacts are provided by residues 10–17 (GRPNVGKS), 57–61 (DTGGL), 120–123 (NKCE), 183–190 (GRPNVGKS), 230–234 (DTAGI), and 295–298 (NKWD). Residues 353–438 (RRVSTSVINE…PIRLLWRSKK (86 aa)) form the KH-like domain.

It belongs to the TRAFAC class TrmE-Era-EngA-EngB-Septin-like GTPase superfamily. EngA (Der) GTPase family. In terms of assembly, associates with the 50S ribosomal subunit.

In terms of biological role, GTPase that plays an essential role in the late steps of ribosome biogenesis. The protein is GTPase Der of Trichormus variabilis (strain ATCC 29413 / PCC 7937) (Anabaena variabilis).